The primary structure comprises 656 residues: Membrane-associated tyrosine- and threonine-specific cdc2-inhibitory kinase wee-1.3 (656 aa).

Residues 1-11 show a composition bias toward polar residues; the sequence is MDETENNTSID. The tract at residues 1–24 is disordered; that stretch reads MDETENNTSIDSVEVGPSSPRVVA. The 248-residue stretch at 107-354 folds into the Protein kinase domain; sequence FQIDEIIGRG…SDALRKHLSI (248 aa). Residues 113–121 and K136 each bind ATP; that span reads IGRGSFGEV. D227 serves as the catalytic Proton acceptor. Residues N232 and D245 each coordinate Mg(2+). 2 disordered regions span residues 449-552 and 617-656; these read PFDF…NSSI and KGKEKPVVEPAELRQRPMRNGLKSLRSRMASFQGSSGDEN. The span at 486-505 shows a compositional bias: polar residues; that stretch reads ATCSSSNSSAIETAEDSLSS. Positions 617–631 are enriched in basic and acidic residues; that stretch reads KGKEKPVVEPAELRQ. Residues 646–656 show a composition bias toward polar residues; it reads ASFQGSSGDEN.

This sequence belongs to the protein kinase superfamily. Ser/Thr protein kinase family. WEE1 subfamily.

The protein localises to the golgi apparatus membrane. It is found in the cytoplasm. The catalysed reaction is L-seryl-[protein] + ATP = O-phospho-L-seryl-[protein] + ADP + H(+). The enzyme catalyses L-threonyl-[protein] + ATP = O-phospho-L-threonyl-[protein] + ADP + H(+). Acts as a negative regulator of entry into mitosis (G2 to M transition) by phosphorylation of the CDK1 kinase during oocyte maturation. Required for embryonic development, germline proliferation and initiation of meiosis during spermatogenesis. Required for chromosome structure during mitosis and negative regulation of nuclear envelope breakdown. The chain is Membrane-associated tyrosine- and threonine-specific cdc2-inhibitory kinase wee-1.3 from Caenorhabditis briggsae.